The chain runs to 384 residues: Urea transporter 1 (384 aa).

The segment at 1-23 (MDDNPTAVKLDQGGNQAPQGQGR) is disordered. Transmembrane regions (helical) follow at residues 61–81 (ISQV…VGLL), 85–105 (PWCA…ALLL), 111–131 (AITA…MAIY), 138–158 (FWWL…FSSA), and 168–188 (LPVF…ATGH). N-linked (GlcNAc...) asparagine glycosylation is present at Asn206. Transmembrane regions (helical) follow at residues 237-257 (GGIF…HAAI), 279-299 (GLWG…FMAL), and 327-347 (VVGL…FLLL).

Belongs to the urea transporter family. As to quaternary structure, homotrimer; each subunit contains a pore through which urea permeates. Identified in a complex with STOM.

It localises to the cell membrane. Its subcellular location is the basolateral cell membrane. It catalyses the reaction urea(in) = urea(out). Mediates the transport of urea driven by a concentration gradient across the cell membranes of erythrocytes and the renal inner medullary collecting duct which is critical to the urinary concentrating mechanism. Facilitates water transport in erythrocytes. The polypeptide is Urea transporter 1 (SLC14A1) (Capra hircus (Goat)).